The sequence spans 856 residues: DNA mismatch repair protein MutS (856 aa).

ATP is bound at residue 618–625; it reads GPNMGGKS.

Belongs to the DNA mismatch repair MutS family.

This protein is involved in the repair of mismatches in DNA. It is possible that it carries out the mismatch recognition step. This protein has a weak ATPase activity. This is DNA mismatch repair protein MutS from Shewanella baltica (strain OS223).